A 771-amino-acid chain; its full sequence is MVGLTPQHYGNAIALMTYLASTALADNKFPDCTSGPLSKLAVCDTSRDVTTRAQSLVDAMSFAEKVNNTQYEAPGVPRLGLPAYNWWSEALHGVAGAPGVHFADSGPFSYATSFAQPILLGASFDDELVKQVATVVGTEGRAFGNAGRAGLDYWTPNINPFRDPRWGRGQETPGEDPLHVSRYVYHLVDGLQGGIGPARPQIAATCKHFAAYDMEDWNGVSRHEFDARVSTQDLAEFYLPSFKSCVRDAQVDAVMCSYNALNGVPTCADPYLLQTLLREHWDWDQPGHWVVSDCGAIDDIYIGHNYTKTGAEAAAVALNAGTDLDCGTVFPKHLGEAAEQGLYTNQTLDRALVRLYSSLVKLGYFDPAEKQPYGSIGWKDVDTPAAEQLAHKAAVEGIVLLKNDQTLPLKAKGTLALIGPYANATKQMQGNYQGPPKYIRTLEWAATQHGYQVQYSPGTAINNSSTAGFAAALAAAKDADVVLYAGGIDNTIESETLDRTTITWPGNQLSLISELSNLHKPLIVIQFGGGQVDDTPLLTNPHVNALLWAGYPSQEGGAAIFDILTGKAAPAGRLPITQYPAAYTAQVPMTEMGLRAGGDNPGRTYRWYDKAVVPFGFGLHYTSFEVSWDRGRLGPYNTAALVNRAPGGSHVDRALFDTFRVQVQNTGTVTSDYVALLFVKTEDAGPEPYPLKTLVGYTRVQQVKPGERRSVEIEVTLGAMARTAANGDLVLYPGKYTLQVDVGERGYPTARVSVHGKEVVLDHFPQPPEGR.

The first 25 residues, 1–25, serve as a signal peptide directing secretion; it reads MVGLTPQHYGNAIALMTYLASTALA. An N-linked (GlcNAc...) asparagine glycan is attached at asparagine 67. Aspartate 293 is an active-site residue. Asparagine 305, asparagine 345, asparagine 423, asparagine 462, and asparagine 463 each carry an N-linked (GlcNAc...) asparagine glycan.

It belongs to the glycosyl hydrolase 3 family.

It is found in the secreted. The enzyme catalyses Hydrolysis of (1-&gt;4)-beta-D-xylans, to remove successive D-xylose residues from the non-reducing termini.. The protein operates within glycan degradation; xylan degradation. Xylan 1,4-beta-xylosidase involved in the hydrolysis of xylan, a major structural heterogeneous polysaccharide found in plant biomass representing the second most abundant polysaccharide in the biosphere, after cellulose. The protein is Probable exo-1,4-beta-xylosidase bxlB (bxlB) of Aspergillus clavatus (strain ATCC 1007 / CBS 513.65 / DSM 816 / NCTC 3887 / NRRL 1 / QM 1276 / 107).